The following is a 112-amino-acid chain: MKGTKLAVVVGMTVAAVSLAAPAQADDYDAPFNNTIHRFGIYGPQDYNAWLAKISCERLSRGVDGDAYKSATFLQRNLPRGTTQGQAFQFLGAAIDHYCPEHVGVLQRAGTR.

An N-terminal signal peptide occupies residues methionine 1 to alanine 25.

This is an uncharacterized protein from Mycobacterium tuberculosis (strain CDC 1551 / Oshkosh).